We begin with the raw amino-acid sequence, 1053 residues long: LRR receptor-like serine/threonine-protein kinase GHR1 (1053 aa).

The N-terminal stretch at 1-18 (MNLSRILLLSMFFLSAMG) is a signal peptide. The Extracellular segment spans residues 19–630 (QLPSQDIMAL…NKSTNKLVKV (612 aa)). LRR repeat units lie at residues 73–93 (GVVL…FSNL), 94–119 (TKLV…SFKS), 121–141 (QFLD…IGRS), 142–165 (VSLR…MGGL), 166–189 (ISLQ…LTRL), 191–212 (DLLY…GFEL), 213–237 (ISSL…FFLL), 239–260 (NASY…LLPG), 262–285 (SESI…GFQL), 286–309 (FQNL…FNYV), 310–333 (YDLE…LLKG), 335–357 (SLLL…SIMS), and 358–384 (TTLH…CVLL). Residue Asn92 is glycosylated (N-linked (GlcNAc...) asparagine). A phosphoserine; by HT1 mark is found at Ser100 and Ser102. Asn103 carries an N-linked (GlcNAc...) asparagine glycan. Phosphoserine; by HT1 is present on residues Ser105 and Ser126. Residues Asn146 and Asn153 are each glycosylated (N-linked (GlcNAc...) asparagine). Residue Asn196 is glycosylated (N-linked (GlcNAc...) asparagine). Asn239 is a glycosylation site (N-linked (GlcNAc...) asparagine). Ser262 bears the Phosphoserine; by HT1 mark. Residue Asn269 is glycosylated (N-linked (GlcNAc...) asparagine). At Ser278 the chain carries Phosphoserine; by HT1. Position 280 is a phosphothreonine; by HT1 (Thr280). Phosphoserine; by HT1 is present on Ser281. Ser325 is subject to Phosphoserine; by HT1. An N-linked (GlcNAc...) asparagine glycan is attached at Asn347. Asn394 carries an N-linked (GlcNAc...) asparagine glycan. 8 LRR repeats span residues 401–425 (WENI…TPQL), 426–449 (LRAN…IPTH), 450–474 (YPKL…LLSM), 476–498 (TLEE…PSSG), 499–521 (SRIR…VFGS), 522–546 (LTNL…MNDI), 548–570 (SLSS…LSSN), and 572–592 (MAFN…LKNF). Tyr406 carries the phosphotyrosine; by HT1 modification. The residue at position 410 (Ser410) is a Phosphoserine; by HT1. The residue at position 415 (Thr415) is a Phosphothreonine; by HT1. Ser417 is modified (phosphoserine; by HT1). Asn432 is a glycosylation site (N-linked (GlcNAc...) asparagine). A Phosphoserine; by HT1 modification is found at Ser434. 3 N-linked (GlcNAc...) asparagine glycosylation sites follow: Asn534, Asn566, and Asn575. 3 positions are modified to phosphoserine; by HT1: Ser613, Ser614, and Ser616. N-linked (GlcNAc...) asparagine glycosylation occurs at Asn621. A helical membrane pass occupies residues 631-651 (VIIVSCAVALIILILVAILLF). Residues 652–1053 (CICKSRRREE…KTIYEDLSSI (402 aa)) lie on the Cytoplasmic side of the membrane. A compositionally biased stretch (basic and acidic residues) spans 662–671 (RSITGKETNR). Residues 662–684 (RSITGKETNRRAQTIPSGSGGGM) are disordered. 2 positions are modified to phosphothreonine; by HT1: Thr669 and Thr675. Phosphoserine; by HT1 occurs at positions 678, 680, 698, 699, and 700. At Ser704 the chain carries Phosphoserine. Thr713 is modified (phosphothreonine; by HT1). Phosphoserine; by HT1 is present on residues Ser716 and Ser718. Thr720 is modified (phosphothreonine; by HT1). Phosphoserine; by HT1 is present on residues Ser721, Ser724, and Ser760. A Phosphothreonine; by HT1 modification is found at Thr764. Ser769 carries the phosphoserine; by HT1 modification. The Protein kinase domain occupies 770–1053 (RAPAEVLGRS…KTIYEDLSSI (284 aa)). ATP is bound by residues 776–784 (LGRSSHGTS) and Lys798. 2 positions are modified to phosphothreonine; by HT1: Thr928 and Thr1010. The residue at position 1015 (Ser1015) is a Phosphoserine; by HT1. Thr1045 is modified (phosphothreonine; by HT1). Position 1047 is a phosphotyrosine; by HT1 (Tyr1047). Phosphoserine; by HT1 occurs at positions 1051 and 1052.

It belongs to the protein kinase superfamily. Ser/Thr protein kinase family. As to quaternary structure, interacts with SLAC1 (via N-terminus). Binds to ABI2, but not ABI1. Interacts with CPK3. In terms of processing, phosphorylated by HT1; this phosphorylation is inhibited by MPK12 and MPK4. Expressed in guard cells and in the vasculature of roots and leaves.

The protein resides in the cell membrane. It catalyses the reaction L-seryl-[protein] + ATP = O-phospho-L-seryl-[protein] + ADP + H(+). It carries out the reaction L-threonyl-[protein] + ATP = O-phospho-L-threonyl-[protein] + ADP + H(+). Negatively regulated by ABI2. Functionally, receptor kinase acting as an early component in abscisic acid (ABA) signaling. Required for darkness, ABA, high CO(2) and hydrogen peroxide (H(2)O(2)) induction of S-type anion currents in guard cells leading to stomatal closure, possibly via the phosphorylation and activation of the anion channel SLAC1 and as a scaffolding component. Seems to act in parallel with SRK2E/OST1 in the ABA signaling pathway which regulates stomatal movement. Binds ATP. Involved in the local and/or systemic stomatal responses (e.g. stomatal closure) to light stress. This is LRR receptor-like serine/threonine-protein kinase GHR1 from Arabidopsis thaliana (Mouse-ear cress).